Reading from the N-terminus, the 395-residue chain is Chaperone protein DnaJ 2 (395 aa).

A J domain is found at 10–75 (NYYADLGVSS…KKRKEYDELK (66 aa)). A CR-type zinc finger spans residues 165–242 (GTTIPVELTG…CHGRGTVRKS (78 aa)). Zn(2+)-binding residues include Cys-178, Cys-181, Cys-194, Cys-197, Cys-216, Cys-219, Cys-230, and Cys-233. CXXCXGXG motif repeat units follow at residues 178-185 (CNTCHGSG), 194-201 (CGTCDGTG), 216-223 (CATCGGTG), and 230-237 (CDNCHGRG).

Belongs to the DnaJ family. As to quaternary structure, homodimer. Zn(2+) serves as cofactor.

Its subcellular location is the cytoplasm. In terms of biological role, participates actively in the response to hyperosmotic and heat shock by preventing the aggregation of stress-denatured proteins and by disaggregating proteins, also in an autonomous, DnaK-independent fashion. Unfolded proteins bind initially to DnaJ; upon interaction with the DnaJ-bound protein, DnaK hydrolyzes its bound ATP, resulting in the formation of a stable complex. GrpE releases ADP from DnaK; ATP binding to DnaK triggers the release of the substrate protein, thus completing the reaction cycle. Several rounds of ATP-dependent interactions between DnaJ, DnaK and GrpE are required for fully efficient folding. Also involved, together with DnaK and GrpE, in the DNA replication of plasmids through activation of initiation proteins. In Corynebacterium glutamicum (strain ATCC 13032 / DSM 20300 / JCM 1318 / BCRC 11384 / CCUG 27702 / LMG 3730 / NBRC 12168 / NCIMB 10025 / NRRL B-2784 / 534), this protein is Chaperone protein DnaJ 2.